Here is a 410-residue protein sequence, read N- to C-terminus: Sensor histidine kinase GlnK (410 aa).

Residues 1 to 15 (MLITVPLAGELKFYP) are Extracellular-facing. A helical transmembrane segment spans residues 16–36 (LNEEFRVSFGAPVFFFFLSLL). The Cytoplasmic segment spans residues 37–38 (RH). The chain crosses the membrane as a helical span at residues 39 to 59 (VPAVLPGFLTGAAVFIFRVFL). Over 60-71 (ELWGGGHNGLTP) the chain is Extracellular. The helical transmembrane segment at 72–92 (ILYDQASGFFFYMTYACLFSI) threads the bilayer. Residues 93-102 (LKANRFRERP) lie on the Cytoplasmic side of the membrane. Residues 103 to 123 (IMLGFIGFMIEVVSDCVELTV) form a helical membrane-spanning segment. The Extracellular segment spans residues 124 to 139 (QFLIFHTVVTPEKITD). A helical transmembrane segment spans residues 140–160 (IAVIAISHTFIVMSFYSVLKL). Over 161-410 (YETQSREKQT…LPVRHLIQKG (250 aa)) the chain is Cytoplasmic. In terms of domain architecture, Histidine kinase spans 189 to 405 (VHLKKTLKTT…VFAIRLPVRH (217 aa)). At H190 the chain carries Phosphohistidine; by autocatalysis.

As to quaternary structure, homotrimer. Under poor nitrogen source such as nitrate, the complex between GlnK and AmtB, which are the transmembrane ammonium transporter and its cognate regulator, respectively, interacts with TnrA. GlnK-ATP complex are not able to bind TnrA.

Its subcellular location is the cell membrane. It carries out the reaction ATP + protein L-histidine = ADP + protein N-phospho-L-histidine.. Member of the two-component regulatory system GlnK/GlnL that positively regulates the expression of the glsA-glnT operon in response to glutamine. It seems that autophosphorylated GlnK transfers a phosphoryl group to GlnL, which positively regulates the expression of the glsA-glnT operon. Interaction between GlnK-AmtB complex and TnrA protects TnrA from proteolytic degradation. The polypeptide is Sensor histidine kinase GlnK (Bacillus subtilis (strain 168)).